Consider the following 274-residue polypeptide: Diaminopimelate epimerase (274 aa).

3 residues coordinate substrate: N13, Q47, and N65. C74 (proton donor) is an active-site residue. Substrate-binding positions include 75–76 (GN), N149, N182, and 200–201 (ER). The active-site Proton acceptor is C209. 210-211 (GT) lines the substrate pocket.

The protein belongs to the diaminopimelate epimerase family. Homodimer.

It localises to the cytoplasm. The catalysed reaction is (2S,6S)-2,6-diaminopimelate = meso-2,6-diaminopimelate. Its pathway is amino-acid biosynthesis; L-lysine biosynthesis via DAP pathway; DL-2,6-diaminopimelate from LL-2,6-diaminopimelate: step 1/1. Functionally, catalyzes the stereoinversion of LL-2,6-diaminopimelate (L,L-DAP) to meso-diaminopimelate (meso-DAP), a precursor of L-lysine and an essential component of the bacterial peptidoglycan. This Rhizorhabdus wittichii (strain DSM 6014 / CCUG 31198 / JCM 15750 / NBRC 105917 / EY 4224 / RW1) (Sphingomonas wittichii) protein is Diaminopimelate epimerase.